Reading from the N-terminus, the 42-residue chain is Photosystem I reaction center subunit IX (42 aa).

The chain crosses the membrane as a helical span at residues 7–27 (YLSAAPVLSTLWLGALAGLLI).

This sequence belongs to the PsaJ family.

It is found in the plastid membrane. Its function is as follows. May help in the organization of the PsaE and PsaF subunits. The chain is Photosystem I reaction center subunit IX from Cuscuta exaltata (Tall dodder).